A 95-amino-acid polypeptide reads, in one-letter code: Beta-defensin 132 (95 aa).

The first 22 residues, 1-22 (MKFLLLVLAALGFLTQVIPASG), serve as a signal peptide directing secretion. Intrachain disulfides connect Cys-27-Cys-55, Cys-35-Cys-49, and Cys-39-Cys-56. The segment at 72-95 (GNHWPSRSRNTQRKNKKQQTTVTP) is disordered.

This sequence belongs to the beta-defensin family.

It is found in the secreted. Its function is as follows. Has antibacterial activity. The chain is Beta-defensin 132 (DEFB132) from Macaca fascicularis (Crab-eating macaque).